The sequence spans 303 residues: Putative HTH-type transcriptional regulatory protein Mpal_0031 (303 aa).

An HTH cro/C1-type domain is found at 132–189 (LRGLREQRNMSLGDLGAVLGVSRRTISKYESGMGTTLEIAIKIEEVFDSGVIESIDLL). Positions 143–162 (LGDLGAVLGVSRRTISKYES) form a DNA-binding region, H-T-H motif.

This chain is Putative HTH-type transcriptional regulatory protein Mpal_0031, found in Methanosphaerula palustris (strain ATCC BAA-1556 / DSM 19958 / E1-9c).